The sequence spans 87 residues: U3-theraphotoxin-Hhn1e (87 aa).

The first 24 residues, 1 to 24 (MVNMKASMFLTFAGLVLLFVVCYA), serve as a signal peptide directing secretion. The propeptide occupies 25-52 (SESEEKEFPKGMLSSIFAVDNDFKQEER). 3 disulfide bridges follow: cysteine 54–cysteine 67, cysteine 61–cysteine 72, and cysteine 66–cysteine 79.

Belongs to the neurotoxin 10 (Hwtx-1) family. 51 (Hntx-8) subfamily. Hntx-8 sub-subfamily. Expressed by the venom gland.

Its subcellular location is the secreted. Its function is as follows. Ion channel inhibitor. The protein is U3-theraphotoxin-Hhn1e of Cyriopagopus hainanus (Chinese bird spider).